Reading from the N-terminus, the 443-residue chain is ATP-dependent protease ATPase subunit HslU (443 aa).

Residues isoleucine 18 and 60–65 each bind ATP; that span reads GVGKTE. Positions 142-162 are disordered; it reads LGFEASPSEESNATRQKFRKK. Aspartate 256, glutamate 321, and arginine 393 together coordinate ATP.

Belongs to the ClpX chaperone family. HslU subfamily. A double ring-shaped homohexamer of HslV is capped on each side by a ring-shaped HslU homohexamer. The assembly of the HslU/HslV complex is dependent on binding of ATP.

The protein localises to the cytoplasm. Its function is as follows. ATPase subunit of a proteasome-like degradation complex; this subunit has chaperone activity. The binding of ATP and its subsequent hydrolysis by HslU are essential for unfolding of protein substrates subsequently hydrolyzed by HslV. HslU recognizes the N-terminal part of its protein substrates and unfolds these before they are guided to HslV for hydrolysis. This Nitrosomonas europaea (strain ATCC 19718 / CIP 103999 / KCTC 2705 / NBRC 14298) protein is ATP-dependent protease ATPase subunit HslU.